We begin with the raw amino-acid sequence, 289 residues long: ATP phosphoribosyltransferase (289 aa).

The protein belongs to the ATP phosphoribosyltransferase family. Long subfamily. Mg(2+) serves as cofactor.

It is found in the cytoplasm. It catalyses the reaction 1-(5-phospho-beta-D-ribosyl)-ATP + diphosphate = 5-phospho-alpha-D-ribose 1-diphosphate + ATP. Its pathway is amino-acid biosynthesis; L-histidine biosynthesis; L-histidine from 5-phospho-alpha-D-ribose 1-diphosphate: step 1/9. Its activity is regulated as follows. Feedback inhibited by histidine. Its function is as follows. Catalyzes the condensation of ATP and 5-phosphoribose 1-diphosphate to form N'-(5'-phosphoribosyl)-ATP (PR-ATP). Has a crucial role in the pathway because the rate of histidine biosynthesis seems to be controlled primarily by regulation of HisG enzymatic activity. The sequence is that of ATP phosphoribosyltransferase from Desulforudis audaxviator (strain MP104C).